The primary structure comprises 274 residues: NAD-dependent protein deacylase (274 aa).

Positions 4–274 (CLLPSSDMDA…GELLPKALAP (271 aa)) constitute a Deacetylase sirtuin-type domain. 29–48 (GAGVSAESGVPTFRGAGGLW) provides a ligand contact to NAD(+). 2 residues coordinate substrate: tyrosine 73 and arginine 76. An NAD(+)-binding site is contributed by 111–114 (QNID). Histidine 129 (proton acceptor) is an active-site residue. 4 residues coordinate Zn(2+): cysteine 137, cysteine 140, cysteine 178, and cysteine 183. NAD(+) is bound by residues 220–222 (GTS), 246–248 (NME), and cysteine 264.

This sequence belongs to the sirtuin family. Class III subfamily. Requires Zn(2+) as cofactor.

It localises to the mitochondrion. The enzyme catalyses N(6)-malonyl-L-lysyl-[protein] + NAD(+) + H2O = 2''-O-malonyl-ADP-D-ribose + nicotinamide + L-lysyl-[protein]. It catalyses the reaction N(6)-succinyl-L-lysyl-[protein] + NAD(+) + H2O = 2''-O-succinyl-ADP-D-ribose + nicotinamide + L-lysyl-[protein]. It carries out the reaction N(6)-glutaryl-L-lysyl-[protein] + NAD(+) + H2O = 2''-O-glutaryl-ADP-D-ribose + nicotinamide + L-lysyl-[protein]. NAD-dependent lysine demalonylase, desuccinylase and deglutarylase that specifically removes malonyl, succinyl and glutaryl groups on target proteins. Has weak NAD-dependent protein deacetylase activity; however this activity may not be physiologically relevant in vivo. This is NAD-dependent protein deacylase from Daphnia pulex (Water flea).